We begin with the raw amino-acid sequence, 245 residues long: Purine nucleoside phosphorylase (245 aa).

His-8 is an a purine D-ribonucleoside binding site. Phosphate-binding positions include 24–28, Arg-46, and 89–92; these read GDPGR and RAGS. 184 to 185 serves as a coordination point for a purine D-ribonucleoside; that stretch reads ME. Asp-207 serves as the catalytic Proton donor.

It belongs to the PNP/MTAP phosphorylase family. Homohexamer; trimer of homodimers.

The enzyme catalyses inosine + phosphate = alpha-D-ribose 1-phosphate + hypoxanthine. The catalysed reaction is guanosine + phosphate = alpha-D-ribose 1-phosphate + guanine. It catalyses the reaction 2'-deoxyguanosine + phosphate = 2-deoxy-alpha-D-ribose 1-phosphate + guanine. It carries out the reaction 2'-deoxyinosine + phosphate = 2-deoxy-alpha-D-ribose 1-phosphate + hypoxanthine. Its pathway is purine metabolism; purine nucleoside salvage. In terms of biological role, as part of the purine salvage pathway, catalyzes the phosphorolytic breakdown of the N-glycosidic bond in the beta-(deoxy)ribonucleoside molecules, with the formation of the corresponding free purine bases and pentose-1-phosphate. Preferentially acts on inosine and guanosine, and to a lesser extent on 2'-deoxyinosine and 2'-deoxyguanosine. This Plasmodium vivax (strain Salvador I) protein is Purine nucleoside phosphorylase.